We begin with the raw amino-acid sequence, 507 residues long: Zinc finger protein Aiolos (507 aa).

Residues 1–85 (MEDIQPTVEL…PMGDAEESEM (85 aa)) are disordered. Residue Thr-20 is modified to Phosphothreonine. Residues Ser-22 and Ser-42 each carry the phosphoserine modification. Basic and acidic residues-rich tracts occupy residues 33-46 (KPHEIENVDSREAP) and 56-72 (DSMKVKDEYSDRDENIM). Residues Lys-61, Lys-73, and Lys-100 each participate in a glycyl lysine isopeptide (Lys-Gly) (interchain with G-Cter in SUMO2) cross-link. C2H2-type zinc fingers lie at residues 117 to 139 (MNCDVCGLSCISFNVLMVHKRSH), 145 to 167 (FQCNQCGASFTQKGNLLRHIKLH), and 173 to 195 (FKCHLCNYACQRRDALTGHLRTH). A C2H2-type 4; atypical zinc finger spans residues 201-223 (YKCEFCGRSYKQRSSLEEHKERC). Lys-244 is covalently cross-linked (Glycyl lysine isopeptide (Lys-Gly) (interchain with G-Cter in SUMO2)). Position 325 is a phosphothreonine (Thr-325). The interval 370–396 (LPSERGLSPNNSAQDSTDTDSNHEDRQ) is disordered. Ser-377 carries the phosphoserine modification. The segment at 450-472 (FRCDHCHVLFLDYVMFTIHMGCH) adopts a C2H2-type 5 zinc-finger fold. The interval 450–502 (FRCDHCHVLFLDYVMFTIHMGCHGFRDPFECNMCGYRSHDRYEFSSHIARGEH) is mediates homodimerization and heterodimerization. The C2H2-type 6; atypical zinc finger occupies 478–502 (FECNMCGYRSHDRYEFSSHIARGEH).

It belongs to the Ikaros C2H2-type zinc-finger protein family. As to quaternary structure, homodimer. Heterodimer with other IKAROS family members. Interacts with IKZF4 and IKZF5. Interacts with HRAS. Interacts with FOXP3; this interaction may be required for silencing target genes and regulating the suppressive activity of FOXP3-positive regulatory T-cells (Treg). Interacts with BCL21L isoform Bcl-X(L); this interaction blocks the anti-apoptotic role of BCL21L. Associates with histone deacetylase complexes containing HDAC1, MTA2 and SIN3A. Interacts with IKZF1. In terms of tissue distribution, expression is restricted to lymphoid tissues. Expressed at highest levels in spleen and at lower levels in the thymus and bone marrow. First detected in more committed lymphoid progenitors and strongly up-regulated as these differentiate into pre-T and pre-B cell precursors.

Its subcellular location is the nucleus. It localises to the cytoplasm. In terms of biological role, transcription factor that plays an important role in the regulation of lymphocyte differentiation. Binds to GGGAA. Plays an essential role in regulation of B-cell differentiation, proliferation and maturation to an effector state. Involved in regulating BCL2 expression and controlling apoptosis in T-cells in an IL2-dependent manner. The protein is Zinc finger protein Aiolos (Ikzf3) of Mus musculus (Mouse).